Reading from the N-terminus, the 496-residue chain is Cytochrome P450 71D95 (496 aa).

Residues E2 to I22 form a helical; Signal-anchor membrane-spanning segment. C436 contributes to the heme binding site.

It belongs to the cytochrome P450 family. Heme is required as a cofactor.

The protein localises to the endoplasmic reticulum membrane. The enzyme catalyses (4S)-limonene + reduced [NADPH--hemoprotein reductase] + O2 = (1S,6R)-isopiperitenol + oxidized [NADPH--hemoprotein reductase] + H2O + H(+). Functionally, hydroxylates both (+)- and (-)-limonene to (+) and (-)-trans-isopiperitenol. In Mentha spicata (Spearmint), this protein is Cytochrome P450 71D95 (CYP71D95).